We begin with the raw amino-acid sequence, 270 residues long: 4-hydroxy-tetrahydrodipicolinate reductase (270 aa).

NAD(+) is bound by residues 9 to 14 (GAGGRM) and Glu35. Arg36 is a binding site for NADP(+). NAD(+)-binding positions include 99 to 101 (GTT) and 123 to 126 (ASNY). His156 acts as the Proton donor/acceptor in catalysis. His157 is a (S)-2,3,4,5-tetrahydrodipicolinate binding site. The Proton donor role is filled by Lys160. Position 166–167 (166–167 (GT)) interacts with (S)-2,3,4,5-tetrahydrodipicolinate.

Belongs to the DapB family.

The protein localises to the cytoplasm. It catalyses the reaction (S)-2,3,4,5-tetrahydrodipicolinate + NAD(+) + H2O = (2S,4S)-4-hydroxy-2,3,4,5-tetrahydrodipicolinate + NADH + H(+). The catalysed reaction is (S)-2,3,4,5-tetrahydrodipicolinate + NADP(+) + H2O = (2S,4S)-4-hydroxy-2,3,4,5-tetrahydrodipicolinate + NADPH + H(+). It participates in amino-acid biosynthesis; L-lysine biosynthesis via DAP pathway; (S)-tetrahydrodipicolinate from L-aspartate: step 4/4. Catalyzes the conversion of 4-hydroxy-tetrahydrodipicolinate (HTPA) to tetrahydrodipicolinate. The chain is 4-hydroxy-tetrahydrodipicolinate reductase from Actinobacillus succinogenes (strain ATCC 55618 / DSM 22257 / CCUG 43843 / 130Z).